The following is a 72-amino-acid chain: Protein kish-A (72 aa).

The signal sequence occupies residues 1–26 (MSAIFNFQSLLTVILLLICTCAYIRS). The Extracellular portion of the chain corresponds to 27 to 53 (LAPSLLDRNKTGLLGIFWKCARIGERK). A glycan (N-linked (GlcNAc...) asparagine) is linked at asparagine 35. Residues 54–71 (SPYVAVCCIVMAFSILFI) traverse the membrane as a helical segment. Position 72 (glutamine 72) is a topological domain, cytoplasmic.

The protein belongs to the KISH family.

Its subcellular location is the golgi apparatus membrane. Functionally, involved in the early part of the secretory pathway. In Bos taurus (Bovine), this protein is Protein kish-A (TMEM167A).